Consider the following 304-residue polypeptide: N-acetylmuramic acid 6-phosphate etherase (304 aa).

Residues 62–225 (IVQAFQNGGR…TTASMVMIGK (164 aa)) enclose the SIS domain. Glutamate 90 (proton donor) is an active-site residue. Glutamate 121 is an active-site residue.

Belongs to the GCKR-like family. MurNAc-6-P etherase subfamily. In terms of assembly, homodimer.

It catalyses the reaction N-acetyl-D-muramate 6-phosphate + H2O = N-acetyl-D-glucosamine 6-phosphate + (R)-lactate. It participates in amino-sugar metabolism; 1,6-anhydro-N-acetylmuramate degradation. It functions in the pathway amino-sugar metabolism; N-acetylmuramate degradation. Its pathway is cell wall biogenesis; peptidoglycan recycling. In terms of biological role, specifically catalyzes the cleavage of the D-lactyl ether substituent of MurNAc 6-phosphate, producing GlcNAc 6-phosphate and D-lactate. Together with AnmK, is also required for the utilization of anhydro-N-acetylmuramic acid (anhMurNAc) either imported from the medium or derived from its own cell wall murein, and thus plays a role in cell wall recycling. The sequence is that of N-acetylmuramic acid 6-phosphate etherase from Actinobacillus pleuropneumoniae serotype 7 (strain AP76).